The sequence spans 598 residues: UvrABC system protein C (598 aa).

The GIY-YIG domain occupies 14 to 91 (DSPGCYLHKD…IQKNMPKYNI (78 aa)). The region spanning 196-231 (DKIIEDLRSKMLAASKEMAFERAAEYRDLISGIATM) is the UVR domain.

This sequence belongs to the UvrC family. In terms of assembly, interacts with UvrB in an incision complex.

It localises to the cytoplasm. Functionally, the UvrABC repair system catalyzes the recognition and processing of DNA lesions. UvrC both incises the 5' and 3' sides of the lesion. The N-terminal half is responsible for the 3' incision and the C-terminal half is responsible for the 5' incision. The sequence is that of UvrABC system protein C from Streptococcus pyogenes serotype M1.